The chain runs to 949 residues: Coiled-coil domain-containing protein 80 (949 aa).

The N-terminal stretch at 1–22 (MMWKMGPHFTTLLAMWLVCGSA) is a signal peptide. 3 disordered regions span residues 24–79 (HSPA…RRKS), 112–132 (SSAREMVRDEGSSARTRMLRF), and 289–610 (HVVQ…PKKS). A compositionally biased stretch (basic and acidic residues) spans 112-123 (SSAREMVRDEGS). The segment covering 295–307 (NEGGGGAGGTGLG) has biased composition (gly residues). A compositionally biased stretch (basic and acidic residues) spans 308-328 (GDKRKEDPRRTQVHPTREAPR). Low complexity predominate over residues 345-380 (RATTLPPAPVTTATRATSRVVTIAARPTTTTAYPAT). Residues 419-429 (PRKEQQREKPQ) are compositionally biased toward basic and acidic residues. A compositionally biased stretch (polar residues) spans 436–445 (KATNYGSFTA). Residues 463-477 (RFRDNRTDKREHGHQ) are compositionally biased toward basic and acidic residues. N-linked (GlcNAc...) asparagine glycosylation occurs at N467. The span at 487–498 (KPVKGKLPKKKD) shows a compositional bias: basic residues. Composition is skewed to basic and acidic residues over residues 499–510 (RILSNEYEDKYD), 534–548 (KESKKLEKLEKPEKE), and 556–581 (AKQDKLLKSEKQAKKAEKKTKQEKDK). Glycyl lysine isopeptide (Lys-Gly) (interchain with G-Cter in SUMO2) cross-links involve residues K544 and K547. The stretch at 554–587 (KSAKQDKLLKSEKQAKKAEKKTKQEKDKNKKKKA) forms a coiled coil.

The protein belongs to the CCDC80 family. As to quaternary structure, binds to various extracellular matrix proteins. In terms of processing, phosphorylated. As to expression, expressed in brain, stomach, colon, rectum, liver, lung, kidney, adipocytes and testis.

The protein localises to the secreted. It localises to the extracellular space. Its subcellular location is the extracellular matrix. Promotes cell adhesion and matrix assembly. The chain is Coiled-coil domain-containing protein 80 (Ccdc80) from Mus musculus (Mouse).